The following is a 172-amino-acid chain: Type IV secretion system putative outer membrane lipoprotein BAB2_0057 (172 aa).

A signal peptide spans 1–15 (MRTLVMVACAVSLAA). Cysteine 16 is lipidated: N-palmitoyl cysteine. Cysteine 16 carries the S-diacylglycerol cysteine lipid modification. The 115-residue stretch at 58 to 172 (WPARPPKQTV…RRVDIEILRK (115 aa)) folds into the OmpA-like domain.

Its subcellular location is the cell outer membrane. Functionally, the virB operon is essential for intracellular survival and is not involved in the invasion process. Constitutes a major determinant of virulence in mice. This protein is essential for pathogenesis in mice but is not required for intracellular survival. The polypeptide is Type IV secretion system putative outer membrane lipoprotein BAB2_0057 (Brucella abortus (strain 2308)).